Here is a 104-residue protein sequence, read N- to C-terminus: L-rhamnose mutarotase (104 aa).

Tyr-18 contributes to the substrate binding site. His-22 serves as the catalytic Proton donor. Substrate is bound by residues Tyr-41 and 76-77 (WW).

Belongs to the rhamnose mutarotase family. Homodimer.

It localises to the cytoplasm. It carries out the reaction alpha-L-rhamnose = beta-L-rhamnose. Its pathway is carbohydrate metabolism; L-rhamnose metabolism. Its function is as follows. Involved in the anomeric conversion of L-rhamnose. The protein is L-rhamnose mutarotase of Sinorhizobium medicae (strain WSM419) (Ensifer medicae).